The chain runs to 258 residues: Electron transfer flavoprotein beta subunit lysine methyltransferase (258 aa).

It belongs to the methyltransferase superfamily. ETFBKMT family.

It is found in the cytoplasm. The protein resides in the mitochondrion matrix. The enzyme catalyses L-lysyl-[protein] + 3 S-adenosyl-L-methionine = N(6),N(6),N(6)-trimethyl-L-lysyl-[protein] + 3 S-adenosyl-L-homocysteine + 3 H(+). In terms of biological role, protein-lysine methyltransferase that selectively trimethylates the flavoprotein ETFB in mitochondria. Thereby, may negatively regulate the function of ETFB in electron transfer from Acyl-CoA dehydrogenases to the main respiratory chain. This chain is Electron transfer flavoprotein beta subunit lysine methyltransferase, found in Danio rerio (Zebrafish).